We begin with the raw amino-acid sequence, 396 residues long: Putative 3-phosphoinositide-dependent protein kinase 2 (396 aa).

Over residues 1–11 (MVRTQTESSTP) the composition is skewed to polar residues. The interval 1 to 53 (MVRTQTESSTPPGIPGGSRQGPAMDGTAAEPRPGAGSLQHAQPPPQPRKKRPE) is disordered. A Protein kinase domain is found at 55 to 315 (FKFGKILGEG…YGPLKAHPFF (261 aa)). ATP-binding positions include 65 to 67 (SFS) and lysine 84. Residues 86–130 (LEKRHIIKENKVPYVTRERDVMSRLDHPFFVKLYFTFQDDEKLYF) are PIF-pocket. ATP-binding positions include 133–135 (SYA) and glutamate 139. Catalysis depends on aspartate 178, which acts as the Proton acceptor. The ATP site is built by glutamate 182 and aspartate 196.

The protein belongs to the protein kinase superfamily. AGC Ser/Thr protein kinase family. PDPK1 subfamily. Post-translationally, phosphorylated on tyrosine and serine/threonine.

Its subcellular location is the cytoplasm. It is found in the membrane. The enzyme catalyses L-seryl-[protein] + ATP = O-phospho-L-seryl-[protein] + ADP + H(+). It catalyses the reaction L-threonyl-[protein] + ATP = O-phospho-L-threonyl-[protein] + ADP + H(+). In terms of biological role, phosphorylates and activates not only PKB/AKT, but also PKA, PKC-zeta, RPS6KA1 and RPS6KB1. May play a general role in signaling processes and in development. The protein is Putative 3-phosphoinositide-dependent protein kinase 2 of Homo sapiens (Human).